An 875-amino-acid polypeptide reads, in one-letter code: Phosphoenolpyruvate carboxylase (875 aa).

Residues His137 and Lys542 contribute to the active site.

The protein belongs to the PEPCase type 1 family. Mg(2+) is required as a cofactor.

It carries out the reaction oxaloacetate + phosphate = phosphoenolpyruvate + hydrogencarbonate. Forms oxaloacetate, a four-carbon dicarboxylic acid source for the tricarboxylic acid cycle. The polypeptide is Phosphoenolpyruvate carboxylase (Pseudomonas entomophila (strain L48)).